The sequence spans 284 residues: Bifunctional protein FolD (284 aa).

NADP(+) is bound by residues 165-167 and serine 190; that span reads GRS.

Belongs to the tetrahydrofolate dehydrogenase/cyclohydrolase family. Homodimer.

The enzyme catalyses (6R)-5,10-methylene-5,6,7,8-tetrahydrofolate + NADP(+) = (6R)-5,10-methenyltetrahydrofolate + NADPH. It carries out the reaction (6R)-5,10-methenyltetrahydrofolate + H2O = (6R)-10-formyltetrahydrofolate + H(+). Its pathway is one-carbon metabolism; tetrahydrofolate interconversion. In terms of biological role, catalyzes the oxidation of 5,10-methylenetetrahydrofolate to 5,10-methenyltetrahydrofolate and then the hydrolysis of 5,10-methenyltetrahydrofolate to 10-formyltetrahydrofolate. This Streptococcus uberis (strain ATCC BAA-854 / 0140J) protein is Bifunctional protein FolD.